The sequence spans 435 residues: GTPase Der (435 aa).

2 consecutive EngA-type G domains span residues 3 to 167 and 176 to 351; these read NIVA…KDEG and PRIA…ENRG. GTP is bound by residues 9–16, 56–60, 119–122, 182–189, 229–233, and 294–297; these read GRPNVGKS, DTGGY, NKSD, GRPNAGKS, DTAGI, and NKWD. The KH-like domain maps to 352-435; that stretch reads KRIPTSELND…VPISIVYRKK (84 aa).

It belongs to the TRAFAC class TrmE-Era-EngA-EngB-Septin-like GTPase superfamily. EngA (Der) GTPase family. As to quaternary structure, associates with the 50S ribosomal subunit.

In terms of biological role, GTPase that plays an essential role in the late steps of ribosome biogenesis. The polypeptide is GTPase Der (Cytophaga hutchinsonii (strain ATCC 33406 / DSM 1761 / CIP 103989 / NBRC 15051 / NCIMB 9469 / D465)).